Consider the following 99-residue polypeptide: Cell division protein FtsB (99 aa).

At 1–3 (MKF) the chain is on the cytoplasmic side. Residues 4 to 21 (FVITLIVLLGLLQYRLWS) traverse the membrane as a helical segment. Residues 22 to 99 (GDNSLPEYFV…GDRAVSSPSQ (78 aa)) lie on the Periplasmic side of the membrane. The stretch at 31–73 (VLQKQIAAQQDGNAKLNERNQVLKEEIIDLKSGTEAIEERARN) forms a coiled coil.

The protein belongs to the FtsB family. As to quaternary structure, part of a complex composed of FtsB, FtsL and FtsQ.

The protein resides in the cell inner membrane. Functionally, essential cell division protein. May link together the upstream cell division proteins, which are predominantly cytoplasmic, with the downstream cell division proteins, which are predominantly periplasmic. The polypeptide is Cell division protein FtsB (Shewanella oneidensis (strain ATCC 700550 / JCM 31522 / CIP 106686 / LMG 19005 / NCIMB 14063 / MR-1)).